We begin with the raw amino-acid sequence, 188 residues long: SRP-independent targeting protein 3 (188 aa).

A helical transmembrane segment spans residues 27–47; it reads TIIMYIRILYCSSIGISWIIY. The residue at position 157 (S157) is a Phosphoserine. The disordered stretch occupies residues 157 to 188; the sequence is SLFGGMGQTGPKTDKKSIEEAERAGNAGVKAE. Over residues 168-179 the composition is skewed to basic and acidic residues; the sequence is KTDKKSIEEAER.

The protein belongs to the PHO88 family. As to quaternary structure, interacts with ENV10/SND2. ENV10/SND2 and PHO88/SND3 form a complex with the translocon in the endoplasmic reticulum membrane.

The protein resides in the endoplasmic reticulum membrane. It is found in the mitochondrion. Its function is as follows. Functions in the SND pathway, a SRP (signal recognition particle) and GET (guided entry of tail-anchored proteins) independent pathway for targeting a broad range of substrate proteins to the endoplasmic reticulum. SND functions in parallel to GET in targeting proteins with downstream hydrophobic motifs. Involved in inorganic phosphate uptake. Also involved in telomere length regulation and maintenance. In Saccharomyces cerevisiae (strain ATCC 204508 / S288c) (Baker's yeast), this protein is SRP-independent targeting protein 3.